The primary structure comprises 288 residues: Bifunctional protein MdtA (288 aa).

NADP(+) contacts are provided by residues 129-132 (TGPV), 152-156 (RKLDK), 195-198 (TAGA), and Lys256.

In terms of assembly, homotrimer.

The protein localises to the cytoplasm. It carries out the reaction 5,10-methylenetetrahydromethanopterin + NADP(+) = 5,10-methenyl-5,6,7,8-tetrahydromethanopterin + NADPH. The catalysed reaction is (6R)-5,10-methylene-5,6,7,8-tetrahydrofolate + NADP(+) = (6R)-5,10-methenyltetrahydrofolate + NADPH. It participates in one-carbon metabolism; formaldehyde degradation; formate from formaldehyde (H(4)MPT route): step 2/5. Its function is as follows. Catalyzes the dehydrogenation of methylene-H(4)MPT. Can also catalyze the reversible dehydrogenation of methylene-H(4)F with 20-fold lower catalytic efficiency. In Methylorubrum extorquens (strain ATCC 14718 / DSM 1338 / JCM 2805 / NCIMB 9133 / AM1) (Methylobacterium extorquens), this protein is Bifunctional protein MdtA.